We begin with the raw amino-acid sequence, 239 residues long: Leucine-rich repeat-containing protein 57 (239 aa).

Residue Gly-2 is the site of N-myristoyl glycine attachment. 8 LRR repeats span residues 39-60 (NLRTIDLSNNKIDSLPPLIIGK), 63-85 (LLKSLSLNNNKLTVLPDELCNLK), 86-107 (KLETLSLNNNHLRELPSTFGQL), 109-130 (ALKTLSLSGNQLGALPPQLCCL), 132-153 (HLDVVDLSKNQIRSIPDTVGEL), 154-175 (QAIELNLNQNQISQLSVKISCC), 177-197 (RLKVLRLEENCLELSMLPQSI), and 202-222 (QICLLAVEGNLFEIKKFRELE).

It is found in the membrane. This chain is Leucine-rich repeat-containing protein 57 (Lrrc57), found in Mus musculus (Mouse).